We begin with the raw amino-acid sequence, 485 residues long: MEFLGTTQTASYCGPKKCCGLTSLPAVQAPVIQECYQPYYLPGYRYLNSWRPSLFYKISNVQTCPDESSSTLRPPTTLPALRSALFSRYSPHDWDQSNQLQVRGAEASRLWASRLTDDSVRLLQDKDQLTQQMQQGTTRNLGQRLSDIGFWKSELSYELDRLLTENQNLETVKRRLECAANEVNCPLQVALECLYHREKRIGIDLVHDNVEKNLIREVDLLKCCQQQMRKLAQRIDLQMRDNRDAQHALERDLDDKSSAQCIDEKCFNLRNTSDCISFFHGMEKIDGTISVPETWAKFSNDNIKHSQNMRADSIRLREEAEHLFETLSDQMWRQFTDTNLAFNARISEVTDVKNKLQTQLAKTLQEIFQAENTIMLLERSIMAKEGPLKVAQTRLECRTWRPNVELCRDVPQFKLVNEVFTIDDTLQTLKLRLRETQDMLQLLVMTKCRLEHELAIKANTLCIDKEKCMGMRKTFPCTPRLVGHT.

Coiled-coil stretches lie at residues 113 to 185, 225 to 251, 342 to 385, and 423 to 443; these read SRLT…EVNC, QQQM…ALER, FNAR…MAKE, and DDTL…LQLL.

This sequence belongs to the tektin family. In terms of assembly, microtubule inner protein component of sperm flagellar doublet microtubules. Interacts with TEKT3. In terms of processing, ubiquitinated, leading to its degradation. Deubiquitinated by USP16, promoting its stability.

The protein localises to the cytoplasm. The protein resides in the cytoskeleton. Its subcellular location is the flagellum axoneme. Functionally, sperm-specific microtubule inner protein (MIP) part of the dynein-decorated doublet microtubules (DMTs) in flagellar axoneme. Forms an extensive interaction network in different conformations that reinforces the helix bundle composed by other tektin proteins (TEKT1 to TEKT4) and MIPs to anchor the tektin bundle onto the tubulin wall of A-tubule of the sperm flagellum. In Macaca fascicularis (Crab-eating macaque), this protein is Tektin-5 (TEKT5).